A 573-amino-acid polypeptide reads, in one-letter code: Heat shock protein 60A (573 aa).

A mitochondrion-targeting transit peptide spans 1-57 (MFRLPVSLARSSISRQLAMRGYAKDVRFGPEVRAMMLQGVDVLADAVAVTMGPKGRN).

Belongs to the chaperonin (HSP60) family.

The protein resides in the mitochondrion matrix. Functionally, prevents misfolding and promotes the refolding and proper assembly of unfolded polypeptides generated under stress conditions. This is Heat shock protein 60A from Drosophila melanogaster (Fruit fly).